A 202-amino-acid polypeptide reads, in one-letter code: MRGHPSLLLLYMALTTCLDTSPSEETDQEVFLGPPEAQSFLSSHTRIPRANHWDLELLTPGNLERECLEERCSWEEAREYFEDNTLTERFWESYIYNGKGGRGRVDVASLAVGLTGGILLIVLAGLGAFWYLRWRQHRGQQPCPQEAGLISPLSPLNPLGPPTPLPPPPPPPPGLPTYEQALAASGVHDAPPPPYTSLRRPH.

Residues 1 to 23 (MRGHPSLLLLYMALTTCLDTSPS) form the signal peptide. A propeptide spanning residues 24–49 (EETDQEVFLGPPEAQSFLSSHTRIPR) is cleaved from the precursor. Residues 50–96 (ANHWDLELLTPGNLERECLEERCSWEEAREYFEDNTLTERFWESYIY) form the Gla domain. Residues 50–109 (ANHWDLELLTPGNLERECLEERCSWEEAREYFEDNTLTERFWESYIYNGKGGRGRVDVAS) lie on the Extracellular side of the membrane. A disulfide bridge links cysteine 67 with cysteine 72. Glutamate 70 is subject to 4-carboxyglutamate. A helical transmembrane segment spans residues 110 to 130 (LAVGLTGGILLIVLAGLGAFW). Topologically, residues 131–202 (YLRWRQHRGQ…PPYTSLRRPH (72 aa)) are cytoplasmic. The tract at residues 143-202 (CPQEAGLISPLSPLNPLGPPTPLPPPPPPPPGLPTYEQALAASGVHDAPPPPYTSLRRPH) is disordered. The segment covering 158 to 175 (PLGPPTPLPPPPPPPPGL) has biased composition (pro residues). The short motif at 175–178 (LPTY) is the LPXY motif; mediates binding to WW domain-containing proteins element. The short motif at 192 to 195 (PPPY) is the PPXY motif; mediates binding to WW domain-containing proteins element.

As to quaternary structure, interacts with NEDD4. Interacts (via cytoplasmic domain) with transcriptional coactivator YAP1. Gamma-carboxyglutamate residues are formed by vitamin K dependent carboxylation. These residues are essential for the binding of calcium. As to expression, widely expressed with highest levels in kidney. Also highly expressed in the thyroid.

The protein resides in the cell membrane. The protein is Transmembrane gamma-carboxyglutamic acid protein 2 of Homo sapiens (Human).